Consider the following 40-residue polypeptide: Large ribosomal subunit protein bL36B (40 aa).

The protein belongs to the bacterial ribosomal protein bL36 family.

This chain is Large ribosomal subunit protein bL36B, found in Arthrobacter sp. (strain FB24).